The sequence spans 343 residues: Thioredoxin domain-containing protein 15 (343 aa).

Positions 1–20 are cleaved as a signal peptide; sequence MQLLCWWQILLWVLGLPARG. The Extracellular portion of the chain corresponds to 21–304; sequence LEEDSGHTWQ…GPLPSTLVKT (284 aa). Residues 86–95 are compositionally biased toward basic and acidic residues; that stretch reads EDQRSTEAHD. A disordered region spans residues 86–112; the sequence is EDQRSTEAHDGTCSAQGDEDPRCGGRE. Residues 162-279 form the Thioredoxin domain; sequence ERNVTGLENF…LKIFIFNQTG (118 aa). N170, N177, N189, and N276 each carry an N-linked (GlcNAc...) asparagine glycan. Residues 305 to 325 form a helical membrane-spanning segment; sequence VDWLLVFSLFFLISFIMYATI. The Cytoplasmic segment spans residues 326-343; it reads RTESIRWLIPGQEQEHAE.

Its subcellular location is the cell projection. It is found in the cilium membrane. Acts as a positive regulator of ciliary hedgehog signaling. Required for cilia biogenesis. This is Thioredoxin domain-containing protein 15 (Txndc15) from Rattus norvegicus (Rat).